The sequence spans 622 residues: Mitochondrial distribution and morphology protein 34 (622 aa).

Positions 1 to 204 (MSFKVNWNSL…LPTLIHQLSL (204 aa)) constitute an SMP-LTD domain. Disordered regions lie at residues 362–399 (YSNK…PSEL) and 568–592 (FDGG…TRNE). Positions 370–384 (KPKRRRIKVHKKNKS) are enriched in basic residues. Residues 390–399 (TTTTSKPSEL) are compositionally biased toward polar residues. Positions 571-583 (GKNNNTNDNNSKN) are enriched in low complexity.

This sequence belongs to the MDM34 family. In terms of assembly, component of the ER-mitochondria encounter structure (ERMES) or MDM complex, composed of MMM1, MDM10, MDM12 and MDM34.

It is found in the mitochondrion outer membrane. Functionally, component of the ERMES/MDM complex, which serves as a molecular tether to connect the endoplasmic reticulum (ER) and mitochondria. Components of this complex are involved in the control of mitochondrial shape and protein biogenesis, and function in nonvesicular lipid trafficking between the ER and mitochondria. MDM34 is required for the interaction of the ER-resident membrane protein MMM1 and the outer mitochondrial membrane-resident beta-barrel protein MDM10. The polypeptide is Mitochondrial distribution and morphology protein 34 (Candida dubliniensis (strain CD36 / ATCC MYA-646 / CBS 7987 / NCPF 3949 / NRRL Y-17841) (Yeast)).